Here is a 323-residue protein sequence, read N- to C-terminus: Cyclin-H (323 aa).

At serine 5 the chain carries Phosphoserine; by CDK8. Phosphoserine is present on serine 132. A disordered region spans residues 299-323; it reads DDDYVPKKSKHEEEEWTDDDLVESL. Over residues 302–311 the composition is skewed to basic and acidic residues; sequence YVPKKSKHEE. Acidic residues predominate over residues 312–323; sequence EEWTDDDLVESL. At threonine 315 the chain carries Phosphothreonine. Phosphoserine is present on serine 322.

The protein belongs to the cyclin family. Cyclin C subfamily. In terms of assembly, associates primarily with CDK7 and MAT1 to form the CAK complex. CAK can further associate with the core-TFIIH to form the TFIIH basal transcription factor.

The protein resides in the nucleus. Regulates CDK7, the catalytic subunit of the CDK-activating kinase (CAK) enzymatic complex. CAK activates the cyclin-associated kinases CDK1, CDK2, CDK4 and CDK6 by threonine phosphorylation. CAK complexed to the core-TFIIH basal transcription factor activates RNA polymerase II by serine phosphorylation of the repetitive C-terminal domain (CTD) of its large subunit (POLR2A), allowing its escape from the promoter and elongation of the transcripts. Involved in cell cycle control and in RNA transcription by RNA polymerase II. Its expression and activity are constant throughout the cell cycle. The sequence is that of Cyclin-H (CCNH) from Macaca fascicularis (Crab-eating macaque).